The following is a 166-amino-acid chain: 3-hydroxyacyl-[acyl-carrier-protein] dehydratase, mitochondrial (166 aa).

Residues 1 to 17 constitute a mitochondrion transit peptide; the sequence is MLAKTVFPRGLLVLRSF. Residues 34–125 enclose the MaoC-like domain; it reads ETRVFSSEDI…VQAIALRETK (92 aa).

In terms of assembly, homodimer. Expressed in leaves, roots, siliques and flowers.

Its subcellular location is the mitochondrion. It carries out the reaction a (3R)-hydroxyacyl-[ACP] = a (2E)-enoyl-[ACP] + H2O. The enzyme catalyses (3R)-hydroxyhexadecanoyl-[ACP] = (2E)-hexadecenoyl-[ACP] + H2O. It catalyses the reaction (3R)-hydroxydecanoyl-[ACP] = (2E)-decenoyl-[ACP] + H2O. Its pathway is lipid metabolism; fatty acid biosynthesis. In terms of biological role, 3-hydroxyl-[acyl-carrier-protein] (3-hydroxyl-ACP) dehydratase required for mitochondrial fatty acid synthesis (mtFAS). MtFAS are essential for photorespiration and plant development, probably by influencing mitochondrial membrane lipid composition and other lipid metabolic pathways. The chain is 3-hydroxyacyl-[acyl-carrier-protein] dehydratase, mitochondrial from Arabidopsis thaliana (Mouse-ear cress).